The primary structure comprises 1052 residues: Mitotic checkpoint serine/threonine-protein kinase BUB1 beta (1052 aa).

In terms of domain architecture, BUB1 N-terminal spans 56–219 (FESEIRFYSG…LEPSEPQRSS (164 aa)). The short motif at 105–112 (GETRYYND) is the Nuclear localization signal element. The segment at 146–179 (AQFYISWAEEYEARENFKKADIIFQEGIERKAEP) is necessary for interaction with KNL1. 2 disordered regions span residues 206-256 (EEEA…NAVP) and 272-327 (ADTA…TSIP). A D-box motif is present at residues 217 to 225 (RSSLAELKS). Residue K243 is modified to N6-acetyllysine; by PCAF. Residue S360 is modified to Phosphoserine. Residues 361-381 (TRKPGREEGDPLQRVQSHQQG) are disordered. A Phosphoserine modification is found at S428. The interval 496–552 (SNPREISPAENILQEQPDSKGSSMPFSIFDESLSDKKDKSPATGGPQVLNAQRRPLS) is disordered. A compositionally biased stretch (polar residues) spans 508-520 (LQEQPDSKGSSMP). Residues S535 and S659 each carry the phosphoserine modification. Residue S665 is modified to Phosphoserine; by PLK1. S686 carries the phosphoserine modification. Positions 756–1040 (VIKQEHLTCD…TISPEALLTQ (285 aa)) constitute a Protein kinase domain. 762 to 770 (LTCDDYRLF) lines the ATP pocket. At T781 the chain carries Phosphothreonine; by PLK1. K784 contacts ATP. Residue D871 is the Proton acceptor of the active site. At T998 the chain carries Phosphothreonine; by PLK1. S1033 and S1050 each carry phosphoserine.

This sequence belongs to the protein kinase superfamily. Ser/Thr protein kinase family. BUB1 subfamily. As to quaternary structure, interacts with CENPE. Interacts with PLK1. Part of a complex containing BUB3, CDC20 and BUB1B. Interacts with anaphase-promoting complex/cyclosome (APC/C). Interacts with KNL1. Interacts with KAT2B. Interacts with RIPK3. Interacts with the closed conformation form of MAD2L1. Interacts with CDC20. Post-translationally, proteolytically cleaved by caspase-3 in a cell cycle specific manner. The cleavage might be involved in the durability of the cell cycle delay. In terms of processing, acetylation at Lys-243 regulates its degradation and timing in anaphase entry. Ubiquitinated. Degraded by the proteasome. Ubiquitinated by UBR5, promoting disassembly of the mitotic checkpoint complex from the APC/C complex. Post-translationally, sumoylated with SUMO2 and SUMO3. The sumoylation mediates the association with CENPE at the kinetochore. In terms of processing, autophosphorylated in vitro. Intramolecular autophosphorylation stimulated by CENPE. Phosphorylated during mitosis and hyperphosphorylated in mitotically arrested cells. Phosphorylation at Ser-659 and Ser-1033 occurs at kinetochores upon mitotic entry with dephosphorylation at the onset of anaphase. Proteolytically cleaved by caspase-3 in a cell cycle specific manner. The cleavage might be involved in the durability of the cell cycle delay. Caspase-3 cleavage is associated with abrogation of the mitotic checkpoint. The major site of cleavage is at Asp-603. Highly expressed in thymus followed by spleen.

It is found in the cytoplasm. The protein localises to the nucleus. Its subcellular location is the chromosome. The protein resides in the centromere. It localises to the kinetochore. The catalysed reaction is L-seryl-[protein] + ATP = O-phospho-L-seryl-[protein] + ADP + H(+). It catalyses the reaction L-threonyl-[protein] + ATP = O-phospho-L-threonyl-[protein] + ADP + H(+). Its activity is regulated as follows. Kinase activity stimulated by CENPE. Functionally, essential component of the mitotic checkpoint. Required for normal mitosis progression and tumor suppression. The mitotic checkpoint delays anaphase until all chromosomes are properly attached to the mitotic spindle. One of its checkpoint functions is to inhibit the activity of the anaphase-promoting complex/cyclosome (APC/C) by blocking the binding of CDC20 to APC/C, independently of its kinase activity. The other is to monitor kinetochore activities that depend on the kinetochore motor CENPE. Required for kinetochore localization of CENPE. Negatively regulates PLK1 activity in interphase cells and suppresses centrosome amplification. Also implicated in triggering apoptosis in polyploid cells that exit aberrantly from mitotic arrest. Essential for tumor suppression. May play a role in regulating aging and fertility. The chain is Mitotic checkpoint serine/threonine-protein kinase BUB1 beta (Bub1b) from Mus musculus (Mouse).